A 215-amino-acid chain; its full sequence is E3 ubiquitin-protein ligase znrf1 (215 aa).

Disordered regions lie at residues 1–39 and 66–96; these read MGGKQSTAGRPRGAFPGVSTDDSAVPPSAHFGHYRPGGT and YTPRGTDSDRAGGGSGSDPAHNGNGYQETGG. A lipid anchor (N-myristoyl glycine) is attached at glycine 2. The segment at 172-213 adopts an RING-type; atypical zinc-finger fold; the sequence is CVICLEELQQGDTIARLPCLCIYHKSCIDSWFEINRSCPEHP.

It is found in the endosome. It localises to the lysosome. Its subcellular location is the membrane. It carries out the reaction S-ubiquitinyl-[E2 ubiquitin-conjugating enzyme]-L-cysteine + [acceptor protein]-L-lysine = [E2 ubiquitin-conjugating enzyme]-L-cysteine + N(6)-ubiquitinyl-[acceptor protein]-L-lysine.. It functions in the pathway protein modification; protein ubiquitination. Its function is as follows. E3 ubiquitin-protein ligase that plays a role in neuron cells differentiation. Plays a role in the establishment and maintenance of neuronal transmission and plasticity. This is E3 ubiquitin-protein ligase znrf1 (znrf1) from Danio rerio (Zebrafish).